We begin with the raw amino-acid sequence, 235 residues long: tRNA (guanine-N(1)-)-methyltransferase (235 aa).

S-adenosyl-L-methionine-binding positions include Gly112 and 132-137 (IGDYVI).

It belongs to the RNA methyltransferase TrmD family. Homodimer.

The protein resides in the cytoplasm. The enzyme catalyses guanosine(37) in tRNA + S-adenosyl-L-methionine = N(1)-methylguanosine(37) in tRNA + S-adenosyl-L-homocysteine + H(+). Functionally, specifically methylates guanosine-37 in various tRNAs. This is tRNA (guanine-N(1)-)-methyltransferase from Anaplasma marginale (strain St. Maries).